Here is a 713-residue protein sequence, read N- to C-terminus: Polyribonucleotide nucleotidyltransferase (713 aa).

Residues Asp498 and Asp504 each coordinate Mg(2+). Positions 565–631 (PRILSLKVPV…RIEDLTREAK (67 aa)) constitute a KH domain. Positions 633-701 (GEIYEGTVTR…ERGKIDLIRP (69 aa)) constitute an S1 motif domain.

Belongs to the polyribonucleotide nucleotidyltransferase family. It depends on Mg(2+) as a cofactor.

It is found in the cytoplasm. It carries out the reaction RNA(n+1) + phosphate = RNA(n) + a ribonucleoside 5'-diphosphate. Its function is as follows. Involved in mRNA degradation. Catalyzes the phosphorolysis of single-stranded polyribonucleotides processively in the 3'- to 5'-direction. This is Polyribonucleotide nucleotidyltransferase from Thermus thermophilus.